Here is a 135-residue protein sequence, read N- to C-terminus: ATP synthase epsilon chain (135 aa).

This sequence belongs to the ATPase epsilon chain family. As to quaternary structure, F-type ATPases have 2 components, CF(1) - the catalytic core - and CF(0) - the membrane proton channel. CF(1) has five subunits: alpha(3), beta(3), gamma(1), delta(1), epsilon(1). CF(0) has three main subunits: a, b and c.

The protein localises to the cell inner membrane. Its function is as follows. Produces ATP from ADP in the presence of a proton gradient across the membrane. The polypeptide is ATP synthase epsilon chain (Rhodopseudomonas palustris (strain HaA2)).